Consider the following 154-residue polypeptide: Transcription antitermination protein NusB (154 aa).

It belongs to the NusB family.

Its function is as follows. Involved in transcription antitermination. Required for transcription of ribosomal RNA (rRNA) genes. Binds specifically to the boxA antiterminator sequence of the ribosomal RNA (rrn) operons. In Oleidesulfovibrio alaskensis (strain ATCC BAA-1058 / DSM 17464 / G20) (Desulfovibrio alaskensis), this protein is Transcription antitermination protein NusB.